The following is a 303-amino-acid chain: N-acetyl-D-glucosamine kinase (303 aa).

ATP contacts are provided by residues glycine 4–lysine 11 and glycine 133–phenylalanine 140. Zn(2+) is bound by residues histidine 157, cysteine 177, cysteine 179, and cysteine 184.

The protein belongs to the ROK (NagC/XylR) family. NagK subfamily.

The enzyme catalyses N-acetyl-D-glucosamine + ATP = N-acetyl-D-glucosamine 6-phosphate + ADP + H(+). It participates in cell wall biogenesis; peptidoglycan recycling. Its function is as follows. Catalyzes the phosphorylation of N-acetyl-D-glucosamine (GlcNAc) derived from cell-wall degradation, yielding GlcNAc-6-P. In Escherichia coli O157:H7, this protein is N-acetyl-D-glucosamine kinase.